Here is an 868-residue protein sequence, read N- to C-terminus: Leucine--tRNA ligase (868 aa).

The 'HIGH' region motif lies at 42 to 52 (PYPSGKLHMGH). The 'KMSKS' region signature appears at 627–631 (KMAKS). Lysine 630 serves as a coordination point for ATP.

This sequence belongs to the class-I aminoacyl-tRNA synthetase family.

Its subcellular location is the cytoplasm. The catalysed reaction is tRNA(Leu) + L-leucine + ATP = L-leucyl-tRNA(Leu) + AMP + diphosphate. This is Leucine--tRNA ligase from Pseudomonas fluorescens (strain ATCC BAA-477 / NRRL B-23932 / Pf-5).